A 585-amino-acid chain; its full sequence is Serine/threonine-protein kinase PknI (585 aa).

The Cytoplasmic portion of the chain corresponds to 1 to 349; sequence MALASGVTFA…ASPTRRRPRR (349 aa). Residues 12 to 252 enclose the Protein kinase domain; sequence YTVVRMLGCS…SCREFADAMN (241 aa). Residues 18 to 26 and lysine 41 contribute to the ATP site; that span reads LGCSAMGEV. Positions 41, 90, and 92 each coordinate ADP. The active-site Proton acceptor is the aspartate 137. A helical membrane pass occupies residues 350-370; it reads ILVGAVAVLLLAGLFAVGIVI. Residues 371 to 585 are Extracellular-facing; that stretch reads GRKTNTTATE…PTTTAPGPGR (215 aa). The disordered stretch occupies residues 546–585; it reads SGDLPPAVTVPDPATIPDTPDTTSTATLTPPTTTAPGPGR. Residues 554–585 show a composition bias toward low complexity; it reads TVPDPATIPDTPDTTSTATLTPPTTTAPGPGR.

Belongs to the protein kinase superfamily. Ser/Thr protein kinase family. Requires Mn(2+) as cofactor. Autophosphorylated at serine and threonine residues.

The protein localises to the cytoplasm. It localises to the cell membrane. The enzyme catalyses L-seryl-[protein] + ATP = O-phospho-L-seryl-[protein] + ADP + H(+). The catalysed reaction is L-threonyl-[protein] + ATP = O-phospho-L-threonyl-[protein] + ADP + H(+). Plays an important role in slowing down the growth of mycobacteria within the infected host. This Mycobacterium bovis (strain ATCC BAA-935 / AF2122/97) protein is Serine/threonine-protein kinase PknI (pknI).